The primary structure comprises 359 residues: Membrane-bound lytic murein transglycosylase C (359 aa).

Residues 1-16 (MKKYLALALIAPLLIS) form the signal peptide. Residue Cys17 is the site of N-palmitoyl cysteine attachment. Cys17 carries S-diacylglycerol cysteine lipidation.

Belongs to the transglycosylase Slt family.

The protein localises to the cell outer membrane. It carries out the reaction Exolytic cleavage of the (1-&gt;4)-beta-glycosidic linkage between N-acetylmuramic acid (MurNAc) and N-acetylglucosamine (GlcNAc) residues in peptidoglycan, from either the reducing or the non-reducing ends of the peptidoglycan chains, with concomitant formation of a 1,6-anhydrobond in the MurNAc residue.. Its function is as follows. Murein-degrading enzyme. May play a role in recycling of muropeptides during cell elongation and/or cell division. This Shigella dysenteriae serotype 1 (strain Sd197) protein is Membrane-bound lytic murein transglycosylase C.